Reading from the N-terminus, the 501-residue chain is Probable malate:quinone oxidoreductase (501 aa).

Belongs to the MQO family. The cofactor is FAD.

The catalysed reaction is (S)-malate + a quinone = a quinol + oxaloacetate. Its pathway is carbohydrate metabolism; tricarboxylic acid cycle; oxaloacetate from (S)-malate (quinone route): step 1/1. This chain is Probable malate:quinone oxidoreductase, found in Mycolicibacterium paratuberculosis (strain ATCC BAA-968 / K-10) (Mycobacterium paratuberculosis).